Reading from the N-terminus, the 354-residue chain is S-adenosylmethionine:tRNA ribosyltransferase-isomerase (354 aa).

Belongs to the QueA family. As to quaternary structure, monomer.

It is found in the cytoplasm. The enzyme catalyses 7-aminomethyl-7-carbaguanosine(34) in tRNA + S-adenosyl-L-methionine = epoxyqueuosine(34) in tRNA + adenine + L-methionine + 2 H(+). It participates in tRNA modification; tRNA-queuosine biosynthesis. In terms of biological role, transfers and isomerizes the ribose moiety from AdoMet to the 7-aminomethyl group of 7-deazaguanine (preQ1-tRNA) to give epoxyqueuosine (oQ-tRNA). This Salmonella dublin (strain CT_02021853) protein is S-adenosylmethionine:tRNA ribosyltransferase-isomerase.